The sequence spans 228 residues: ATP-dependent dethiobiotin synthetase BioD (228 aa).

12–17 (DVGKTY) provides a ligand contact to ATP. Thr-16 contributes to the Mg(2+) binding site. Lys-37 is a catalytic residue. Residues Asp-53, 114-117 (EGMG), 174-175 (ND), 203-205 (PFI), and Asn-210 contribute to the ATP site. 2 residues coordinate Mg(2+): Asp-53 and Glu-114.

This sequence belongs to the dethiobiotin synthetase family. As to quaternary structure, homodimer. It depends on Mg(2+) as a cofactor.

The protein resides in the cytoplasm. The enzyme catalyses (7R,8S)-7,8-diammoniononanoate + CO2 + ATP = (4R,5S)-dethiobiotin + ADP + phosphate + 3 H(+). The protein operates within cofactor biosynthesis; biotin biosynthesis; biotin from 7,8-diaminononanoate: step 1/2. Its function is as follows. Catalyzes a mechanistically unusual reaction, the ATP-dependent insertion of CO2 between the N7 and N8 nitrogen atoms of 7,8-diaminopelargonic acid (DAPA, also called 7,8-diammoniononanoate) to form a ureido ring. The sequence is that of ATP-dependent dethiobiotin synthetase BioD from Nitrosopumilus maritimus (strain SCM1).